Reading from the N-terminus, the 433-residue chain is Enolase (433 aa).

Gln-167 serves as a coordination point for (2R)-2-phosphoglycerate. Glu-209 acts as the Proton donor in catalysis. Mg(2+) is bound by residues Asp-246, Glu-287, and Asp-314. Residues Lys-339, Arg-368, Ser-369, and Lys-390 each contribute to the (2R)-2-phosphoglycerate site. Lys-339 acts as the Proton acceptor in catalysis.

Belongs to the enolase family. The cofactor is Mg(2+).

The protein resides in the cytoplasm. It localises to the secreted. It is found in the cell surface. The enzyme catalyses (2R)-2-phosphoglycerate = phosphoenolpyruvate + H2O. It participates in carbohydrate degradation; glycolysis; pyruvate from D-glyceraldehyde 3-phosphate: step 4/5. In terms of biological role, catalyzes the reversible conversion of 2-phosphoglycerate (2-PG) into phosphoenolpyruvate (PEP). It is essential for the degradation of carbohydrates via glycolysis. The chain is Enolase from Prochlorococcus marinus (strain NATL2A).